Here is a 151-residue protein sequence, read N- to C-terminus: US8.5 protein (151 aa).

A disordered region spans residues 27–107 (SSQPLDPEGP…APSPHPRPPG (81 aa)). Residues 80–91 (SDERGPPRHDRP) are compositionally biased toward basic and acidic residues.

Its subcellular location is the host nucleus. The protein resides in the host nucleolus. This Human herpesvirus 1 (strain F) (HHV-1) protein is US8.5 protein (US8.5).